A 340-amino-acid polypeptide reads, in one-letter code: Pseudaminic acid synthase (340 aa).

One can recognise an AFP-like domain in the interval 281 to 337 (SLFVIKDIQKGEALTENNIKALRPNLGLHPKFYKEILGQKASKFLKANTPLSADDIE).

Belongs to the pseudaminic acid synthase family. It depends on a divalent metal cation as a cofactor.

The catalysed reaction is 2,4-diacetamido-2,4,6-trideoxy-beta-L-altrose + phosphoenolpyruvate + H2O = pseudaminate + phosphate. Catalyzes the fifth step in the biosynthesis of pseudaminic acid, a sialic-acid-like sugar that is used to modify flagellin. Catalyzes the condensation of phosphoenolpyruvate with 2,4-diacetamido-2,4,6-trideoxy-beta-l-altropyranose, forming pseudaminic acid. The protein is Pseudaminic acid synthase (pseI) of Helicobacter pylori (strain ATCC 700392 / 26695) (Campylobacter pylori).